A 272-amino-acid polypeptide reads, in one-letter code: Putative phosphoenolpyruvate synthase regulatory protein (272 aa).

Residue 152–159 (GVSRCGKT) coordinates ADP.

The protein belongs to the pyruvate, phosphate/water dikinase regulatory protein family. PSRP subfamily.

It catalyses the reaction [pyruvate, water dikinase] + ADP = [pyruvate, water dikinase]-phosphate + AMP + H(+). It carries out the reaction [pyruvate, water dikinase]-phosphate + phosphate + H(+) = [pyruvate, water dikinase] + diphosphate. Bifunctional serine/threonine kinase and phosphorylase involved in the regulation of the phosphoenolpyruvate synthase (PEPS) by catalyzing its phosphorylation/dephosphorylation. The protein is Putative phosphoenolpyruvate synthase regulatory protein of Stutzerimonas stutzeri (strain A1501) (Pseudomonas stutzeri).